A 120-amino-acid polypeptide reads, in one-letter code: NAD(P)H-quinone oxidoreductase subunit 3, chloroplastic (120 aa).

The next 3 helical transmembrane spans lie at 9–29, 64–84, and 88–108; these read IFWA…LISG, MFAL…PWAV, and ILGV…VVGS.

This sequence belongs to the complex I subunit 3 family. As to quaternary structure, NDH is composed of at least 16 different subunits, 5 of which are encoded in the nucleus.

It localises to the plastid. The protein localises to the chloroplast thylakoid membrane. The enzyme catalyses a plastoquinone + NADH + (n+1) H(+)(in) = a plastoquinol + NAD(+) + n H(+)(out). It carries out the reaction a plastoquinone + NADPH + (n+1) H(+)(in) = a plastoquinol + NADP(+) + n H(+)(out). NDH shuttles electrons from NAD(P)H:plastoquinone, via FMN and iron-sulfur (Fe-S) centers, to quinones in the photosynthetic chain and possibly in a chloroplast respiratory chain. The immediate electron acceptor for the enzyme in this species is believed to be plastoquinone. Couples the redox reaction to proton translocation, and thus conserves the redox energy in a proton gradient. The polypeptide is NAD(P)H-quinone oxidoreductase subunit 3, chloroplastic (Nymphaea alba (White water-lily)).